The following is a 239-amino-acid chain: MICOS complex subunit mic25a (239 aa).

Gly-2 carries the N-myristoyl glycine lipid modification. Disordered stretches follow at residues 27-88 (VKLS…KKRY) and 113-133 (DISR…ERAK). Positions 50–78 (NKENQGHQTRTPSTSDAQAPKTQAKTTFP) are enriched in polar residues. Residues 79–88 (DSKEELKKRY) show a composition bias toward basic and acidic residues. Positions 79–166 (DSKEELKKRY…ITQLEKKNEE (88 aa)) form a coiled coil. The CHCH domain maps to 192–234 (EPVCLNLQAQILNCYRENREQTLQCSDLAKEYMQCINAAKKNL). Short sequence motifs (cx9C motif) lie at residues 195–205 (CLNLQAQILNC) and 216–226 (CSDLAKEYMQC). Intrachain disulfides connect Cys-195/Cys-226 and Cys-205/Cys-216.

This sequence belongs to the MICOS complex subunit Mic19 family. Metazoan Mic25 subfamily. As to quaternary structure, component of the mitochondrial contact site and cristae organizing system (MICOS) complex (also known as MINOS or MitOS complex).

It is found in the mitochondrion inner membrane. Functionally, component of the MICOS complex, a large protein complex of the mitochondrial inner membrane that plays crucial roles in the maintenance of crista junctions, inner membrane architecture, and formation of contact sites to the outer membrane. The sequence is that of MICOS complex subunit mic25a (chchd6a) from Danio rerio (Zebrafish).